A 58-amino-acid chain; its full sequence is Large ribosomal subunit protein uL30 (58 aa).

It belongs to the universal ribosomal protein uL30 family. In terms of assembly, part of the 50S ribosomal subunit.

In Pseudomonas entomophila (strain L48), this protein is Large ribosomal subunit protein uL30.